The primary structure comprises 754 residues: Phosphoribosylformylglycinamidine synthase subunit PurL (754 aa).

Residues 1–21 (MLDTVEHAATTPDQPQPYGEL) are disordered. Residue His-54 is part of the active site. ATP is bound by residues Tyr-57 and Lys-101. Glu-103 is a Mg(2+) binding site. Residues 104–107 (SHNH) and Arg-126 contribute to the substrate site. The active-site Proton acceptor is the His-105. Residue Asp-127 coordinates Mg(2+). Gln-252 is a substrate binding site. Asp-280 provides a ligand contact to Mg(2+). 324 to 326 (ESQ) is a binding site for substrate. Residues Asn-512 and Gly-549 each contribute to the ATP site. Mg(2+) is bound at residue Asn-550. A substrate-binding site is contributed by Ser-552.

Belongs to the FGAMS family. Monomer. Part of the FGAM synthase complex composed of 1 PurL, 1 PurQ and 2 PurS subunits.

Its subcellular location is the cytoplasm. It catalyses the reaction N(2)-formyl-N(1)-(5-phospho-beta-D-ribosyl)glycinamide + L-glutamine + ATP + H2O = 2-formamido-N(1)-(5-O-phospho-beta-D-ribosyl)acetamidine + L-glutamate + ADP + phosphate + H(+). Its pathway is purine metabolism; IMP biosynthesis via de novo pathway; 5-amino-1-(5-phospho-D-ribosyl)imidazole from N(2)-formyl-N(1)-(5-phospho-D-ribosyl)glycinamide: step 1/2. Its function is as follows. Part of the phosphoribosylformylglycinamidine synthase complex involved in the purines biosynthetic pathway. Catalyzes the ATP-dependent conversion of formylglycinamide ribonucleotide (FGAR) and glutamine to yield formylglycinamidine ribonucleotide (FGAM) and glutamate. The FGAM synthase complex is composed of three subunits. PurQ produces an ammonia molecule by converting glutamine to glutamate. PurL transfers the ammonia molecule to FGAR to form FGAM in an ATP-dependent manner. PurS interacts with PurQ and PurL and is thought to assist in the transfer of the ammonia molecule from PurQ to PurL. This chain is Phosphoribosylformylglycinamidine synthase subunit PurL, found in Mycobacterium bovis (strain ATCC BAA-935 / AF2122/97).